Here is a 352-residue protein sequence, read N- to C-terminus: Chorismate synthase (352 aa).

NADP(+) is bound by residues R48 and R54. FMN is bound by residues 125–127, 238–239, A278, 293–297, and R319; these read RAS, NA, and KPASS.

Belongs to the chorismate synthase family. As to quaternary structure, homotetramer. FMNH2 serves as cofactor.

The catalysed reaction is 5-O-(1-carboxyvinyl)-3-phosphoshikimate = chorismate + phosphate. It functions in the pathway metabolic intermediate biosynthesis; chorismate biosynthesis; chorismate from D-erythrose 4-phosphate and phosphoenolpyruvate: step 7/7. Its function is as follows. Catalyzes the anti-1,4-elimination of the C-3 phosphate and the C-6 proR hydrogen from 5-enolpyruvylshikimate-3-phosphate (EPSP) to yield chorismate, which is the branch point compound that serves as the starting substrate for the three terminal pathways of aromatic amino acid biosynthesis. This reaction introduces a second double bond into the aromatic ring system. This Coxiella burnetii (strain RSA 493 / Nine Mile phase I) protein is Chorismate synthase.